A 488-amino-acid polypeptide reads, in one-letter code: Limb region 1 protein homolog (488 aa).

The Extracellular portion of the chain corresponds to 1–18 (MEADEVSIREQNFHSQVR). Residues 19–39 (EYTICFLLFAVLYIVSYFIIT) traverse the membrane as a helical segment. Topologically, residues 40-61 (RYKRKADEQEDEDAIVNRISLF) are cytoplasmic. A helical membrane pass occupies residues 62–82 (LSTFTLAVSAGAVLLLPFSII). Residues 83 to 109 (SNEILLSFPQNYYIQWLNGSLIHGLWN) lie on the Extracellular side of the membrane. Residues 110–130 (LASLFSNLCLFVLMPFAFFFL) form a helical membrane-spanning segment. At 131 to 150 (ESEGFAGLKKGIRARILETL) the chain is on the cytoplasmic side. The chain crosses the membrane as a helical span at residues 151–171 (VMLILLALLILGIVWVASALI). Topologically, residues 172 to 186 (DNDAASMESLYDLWE) are extracellular. The helical transmembrane segment at 187 to 207 (FYLPYLYSCISLMGCLLLLLC) threads the bilayer. Residues 208-295 (TPVGLSRMFT…AWERNLVYPA (88 aa)) lie on the Cytoplasmic side of the membrane. Positions 246-286 (IQRKLNGISSTLENQTVELERELEKVKCKKTNLERRKKASA) form a coiled coil. Residues 296 to 316 (VMILLLIETSISVLLVAFNIL) traverse the membrane as a helical segment. Residues 317–338 (YLLVDETAMPKGSGGPGIGNAS) lie on the Extracellular side of the membrane. Residues 339–359 (LSTFGFVGAALEIILIFYLMV) traverse the membrane as a helical segment. Residues 360–382 (SSVVGFYSLRFFENFIPRKDDTT) lie on the Cytoplasmic side of the membrane. The helical transmembrane segment at 383 to 403 (MTKIIGNCVSILVLSSALPVM) threads the bilayer. The Extracellular segment spans residues 404-425 (SRTLGITRFDLLGDFGRFNWLG). Residues 426–446 (NFYIVLSYNLLFAIMTTLCLV) form a helical membrane-spanning segment. At 447–488 (RKFTSAVREELLKALGLDKLHLSNNPRDSETKPSANGHQKTL) the chain is on the cytoplasmic side.

Belongs to the LIMR family. As to expression, detected ubiquitously at low levels throughout the developing embryo. Present initially in the limb mesoderm as the limb bud emerges from the body wall and up-regulated along the posterior margin of the developing limb bud with progression of the limb outgrowth. Higher levels are detected in limb buds, otic vesicles and pharyngeal arches. Isoform 1 is detected in lung, spleen, heart, breast muscle, cartilage and liver of the adult tissues. Isoform 3 is detected in adult lung, spleen, heart and breast muscle but not detected in cartilage and liver.

The protein localises to the membrane. Putative membrane receptor. This is Limb region 1 protein homolog (LMBR1) from Gallus gallus (Chicken).